Consider the following 243-residue polypeptide: Probable transcriptional regulatory protein Tbd_2215 (243 aa).

It belongs to the TACO1 family.

It is found in the cytoplasm. The polypeptide is Probable transcriptional regulatory protein Tbd_2215 (Thiobacillus denitrificans (strain ATCC 25259 / T1)).